The sequence spans 152 residues: D-aminoacyl-tRNA deacylase (152 aa).

Positions 142-143 (GP) match the Gly-cisPro motif, important for rejection of L-amino acids motif.

It belongs to the DTD family. As to quaternary structure, homodimer.

Its subcellular location is the cytoplasm. It catalyses the reaction glycyl-tRNA(Ala) + H2O = tRNA(Ala) + glycine + H(+). The enzyme catalyses a D-aminoacyl-tRNA + H2O = a tRNA + a D-alpha-amino acid + H(+). Its function is as follows. An aminoacyl-tRNA editing enzyme that deacylates mischarged D-aminoacyl-tRNAs. Also deacylates mischarged glycyl-tRNA(Ala), protecting cells against glycine mischarging by AlaRS. Acts via tRNA-based rather than protein-based catalysis; rejects L-amino acids rather than detecting D-amino acids in the active site. By recycling D-aminoacyl-tRNA to D-amino acids and free tRNA molecules, this enzyme counteracts the toxicity associated with the formation of D-aminoacyl-tRNA entities in vivo and helps enforce protein L-homochirality. The protein is D-aminoacyl-tRNA deacylase of Burkholderia vietnamiensis (strain G4 / LMG 22486) (Burkholderia cepacia (strain R1808)).